A 388-amino-acid chain; its full sequence is Spermidine/putrescine import ATP-binding protein PotA (388 aa).

The 231-residue stretch at 17 to 247 (IEIDHVTKRF…PATVFVANFI (231 aa)) folds into the ABC transporter domain. Residue 49 to 56 (GPSGCGKT) participates in ATP binding.

This sequence belongs to the ABC transporter superfamily. Spermidine/putrescine importer (TC 3.A.1.11.1) family. The complex is composed of two ATP-binding proteins (PotA), two transmembrane proteins (PotB and PotC) and a solute-binding protein (PotD).

The protein localises to the cell membrane. It catalyses the reaction ATP + H2O + polyamine-[polyamine-binding protein]Side 1 = ADP + phosphate + polyamineSide 2 + [polyamine-binding protein]Side 1.. In terms of biological role, part of the ABC transporter complex PotABCD involved in spermidine/putrescine import. Responsible for energy coupling to the transport system. This Mycobacterium sp. (strain KMS) protein is Spermidine/putrescine import ATP-binding protein PotA.